The following is a 718-amino-acid chain: NF-kappa-B inhibitor zeta (718 aa).

A compositionally biased stretch (basic and acidic residues) spans 1–17 (MIVDKLLDDSRGGEGLR). 2 disordered regions span residues 1–20 (MIVD…RDAA) and 58–108 (SAPG…RQQR). The segment covering 58–83 (SAPGSPGSDSSDFSSASSVSSCGAVE) has biased composition (low complexity). Over residues 84-97 (SRSRGGARAERQPV) the composition is skewed to basic and acidic residues. The region spanning 108–130 (RGPFQGVRVKNSVKELLLHIRSH) is the OCA domain. A Nuclear localization signal motif is present at residues 164-179 (KRKGPDSLSDGPACKR). Residues 186 to 211 (QFLTPPQTPTPGESMEDVHLNEPKQE) form a disordered region. Basic and acidic residues predominate over residues 201–211 (EDVHLNEPKQE). The required for transcriptional activity stretch occupies residues 321 to 394 (AYEPNLFDGP…MVGHEMASDS (74 aa)). The interaction with NFKB1/p50 stretch occupies residues 404–718 (MGNPMNTTQL…KSIQQRAPPY (315 aa)). ANK repeat units lie at residues 443–472 (DGDT…ALHM), 479–508 (NGQS…QVNT), 512–541 (WGRT…GSNQ), 551–580 (DGLT…HSPE), 582–607 (QELL…AVEA), 612–641 (SGRT…CLSF), and 648–681 (NGNT…DPST).

As to quaternary structure, interacts with NFKB1/p50. Interacts with RELA. Interacts with AKIRIN2. In terms of tissue distribution, expressed at high levels in peripheral blood leukocytes and lung, at moderate levels in liver, placenta, and at low levels in spleen, kidney, skeletal muscle and heart.

It localises to the nucleus. Functionally, involved in regulation of NF-kappa-B transcription factor complexes. Inhibits NF-kappa-B activity without affecting its nuclear translocation upon stimulation. Inhibits DNA-binding of RELA and NFKB1/p50, and of the NF-kappa-B p65-p50 heterodimer and the NF-kappa-B p50-p50 homodimer. Also seems to activate NF-kappa-B-mediated transcription. In vitro, upon association with NFKB1/p50 has transcriptional activation activity and, together with NFKB1/p50 and RELA, is recruited to LCN2 promoters. Promotes transcription of LCN2 and DEFB4. Is recruited to IL-6 promoters and activates IL-6 but decreases TNF-alpha production in response to LPS. Seems to be involved in the induction of inflammatory genes activated through TLR/IL-1 receptor signaling. Involved in the induction of T helper 17 cells (Th17) differentiation upon recognition of antigen by T cell antigen receptor (TCR). The protein is NF-kappa-B inhibitor zeta (NFKBIZ) of Homo sapiens (Human).